A 124-amino-acid chain; its full sequence is Large ribosomal subunit protein uL18 (124 aa).

This sequence belongs to the universal ribosomal protein uL18 family. In terms of assembly, part of the 50S ribosomal subunit; part of the 5S rRNA/L5/L18/L25 subcomplex. Contacts the 5S and 23S rRNAs.

This is one of the proteins that bind and probably mediate the attachment of the 5S RNA into the large ribosomal subunit, where it forms part of the central protuberance. This chain is Large ribosomal subunit protein uL18, found in Caldicellulosiruptor saccharolyticus (strain ATCC 43494 / DSM 8903 / Tp8T 6331).